A 50-amino-acid polypeptide reads, in one-letter code: uncharacterized protein (50 aa).

Positions 28 to 50 are disordered; the sequence is SKLSPVTNGGKTIGKSNKVSKND. Residues 29–50 are compositionally biased toward polar residues; it reads KLSPVTNGGKTIGKSNKVSKND.

This is an uncharacterized protein from Haemophilus influenzae (strain ATCC 51907 / DSM 11121 / KW20 / Rd).